A 122-amino-acid polypeptide reads, in one-letter code: MIIKRSRKELRRIRHLRIRKKITGTPERPRLAVYKSLRYIYAQIIDDTKGHTLVAASSLEKELRSQLKSTKNIEAAKLVGEVIAKRALEKGIKRVVFDRGGFLYHGKVKALADSARAAGLEF.

It belongs to the universal ribosomal protein uL18 family. As to quaternary structure, part of the 50S ribosomal subunit; part of the 5S rRNA/L5/L18/L25 subcomplex. Contacts the 5S and 23S rRNAs.

Its function is as follows. This is one of the proteins that bind and probably mediate the attachment of the 5S RNA into the large ribosomal subunit, where it forms part of the central protuberance. This chain is Large ribosomal subunit protein uL18, found in Dictyoglomus turgidum (strain DSM 6724 / Z-1310).